A 352-amino-acid chain; its full sequence is tRNA pseudouridine synthase D (352 aa).

The Nucleophile role is filled by Asp-81. Residues 157-303 form the TRUD domain; that stretch reads GIPNYFGAQR…MEHERRILRL (147 aa).

The protein belongs to the pseudouridine synthase TruD family.

It catalyses the reaction uridine(13) in tRNA = pseudouridine(13) in tRNA. Responsible for synthesis of pseudouridine from uracil-13 in transfer RNAs. This chain is tRNA pseudouridine synthase D, found in Pseudomonas syringae pv. syringae (strain B728a).